Reading from the N-terminus, the 417-residue chain is Serine hydroxymethyltransferase (417 aa).

(6S)-5,6,7,8-tetrahydrofolate-binding positions include L122 and 126–128; that span reads GHL. At K230 the chain carries N6-(pyridoxal phosphate)lysine. 355–357 provides a ligand contact to (6S)-5,6,7,8-tetrahydrofolate; it reads SPF.

This sequence belongs to the SHMT family. As to quaternary structure, homodimer. The cofactor is pyridoxal 5'-phosphate.

It localises to the cytoplasm. The enzyme catalyses (6R)-5,10-methylene-5,6,7,8-tetrahydrofolate + glycine + H2O = (6S)-5,6,7,8-tetrahydrofolate + L-serine. The protein operates within one-carbon metabolism; tetrahydrofolate interconversion. Its pathway is amino-acid biosynthesis; glycine biosynthesis; glycine from L-serine: step 1/1. Its function is as follows. Catalyzes the reversible interconversion of serine and glycine with tetrahydrofolate (THF) serving as the one-carbon carrier. This reaction serves as the major source of one-carbon groups required for the biosynthesis of purines, thymidylate, methionine, and other important biomolecules. Also exhibits THF-independent aldolase activity toward beta-hydroxyamino acids, producing glycine and aldehydes, via a retro-aldol mechanism. The chain is Serine hydroxymethyltransferase from Francisella tularensis subsp. novicida (strain U112).